The primary structure comprises 51 residues: Large ribosomal subunit protein eL39 (51 aa).

The protein belongs to the eukaryotic ribosomal protein eL39 family.

In Methanopyrus kandleri (strain AV19 / DSM 6324 / JCM 9639 / NBRC 100938), this protein is Large ribosomal subunit protein eL39.